The sequence spans 394 residues: Acetyl-CoA acetyltransferase (394 aa).

Cysteine 89 acts as the Acyl-thioester intermediate in catalysis. Catalysis depends on proton acceptor residues histidine 350 and cysteine 380.

The protein belongs to the thiolase-like superfamily. Thiolase family. As to quaternary structure, homotetramer.

The protein localises to the cytoplasm. It catalyses the reaction 2 acetyl-CoA = acetoacetyl-CoA + CoA. Its pathway is biopolymer metabolism; poly-(R)-3-hydroxybutanoate biosynthesis. It functions in the pathway metabolic intermediate biosynthesis; (R)-mevalonate biosynthesis; (R)-mevalonate from acetyl-CoA: step 1/3. The sequence is that of Acetyl-CoA acetyltransferase from Thiocystis violacea.